Here is a 767-residue protein sequence, read N- to C-terminus: AMP deaminase 3 (767 aa).

A phosphoserine mark is found at S85 and S107. Disordered regions lie at residues 89–111 and 181–205; these read QMPPQQDWKGPPAASPAMSPTTP and LGHPRADTAPPEEGLPDFHPPPLPQ. The Zn(2+) site is built by H317 and H319. Residues H319 and 388 to 393 contribute to the substrate site; that span reads KFNSKY. Zn(2+) is bound at residue H586. E589 provides a ligand contact to substrate. H608 acts as the Proton acceptor in catalysis. D663 provides a ligand contact to Zn(2+). 664–667 provides a ligand contact to substrate; sequence DPMQ.

The protein belongs to the metallo-dependent hydrolases superfamily. Adenosine and AMP deaminases family. Homotetramer. The cofactor is Zn(2+).

It carries out the reaction AMP + H2O + H(+) = IMP + NH4(+). It functions in the pathway purine metabolism; IMP biosynthesis via salvage pathway; IMP from AMP: step 1/1. Functionally, AMP deaminase plays a critical role in energy metabolism. The protein is AMP deaminase 3 of Homo sapiens (Human).